A 339-amino-acid chain; its full sequence is Ketol-acid reductoisomerase (NADP(+)) (339 aa).

Residues 1-182 (MRVYYDRDAD…GGGRSGIIET (182 aa)) enclose the KARI N-terminal Rossmann domain. Residues 24-27 (YGSQ), Lys48, Ser51, Thr53, and 83-86 (DELQ) contribute to the NADP(+) site. His108 is a catalytic residue. Gly134 contacts NADP(+). The region spanning 183 to 328 (NFKEECETDL…AKLRAMMPWI (146 aa)) is the KARI C-terminal knotted domain. Positions 191, 195, 227, and 231 each coordinate Mg(2+). Residue Ser252 participates in substrate binding.

Belongs to the ketol-acid reductoisomerase family. It depends on Mg(2+) as a cofactor.

It carries out the reaction (2R)-2,3-dihydroxy-3-methylbutanoate + NADP(+) = (2S)-2-acetolactate + NADPH + H(+). It catalyses the reaction (2R,3R)-2,3-dihydroxy-3-methylpentanoate + NADP(+) = (S)-2-ethyl-2-hydroxy-3-oxobutanoate + NADPH + H(+). It participates in amino-acid biosynthesis; L-isoleucine biosynthesis; L-isoleucine from 2-oxobutanoate: step 2/4. Its pathway is amino-acid biosynthesis; L-valine biosynthesis; L-valine from pyruvate: step 2/4. Involved in the biosynthesis of branched-chain amino acids (BCAA). Catalyzes an alkyl-migration followed by a ketol-acid reduction of (S)-2-acetolactate (S2AL) to yield (R)-2,3-dihydroxy-isovalerate. In the isomerase reaction, S2AL is rearranged via a Mg-dependent methyl migration to produce 3-hydroxy-3-methyl-2-ketobutyrate (HMKB). In the reductase reaction, this 2-ketoacid undergoes a metal-dependent reduction by NADPH to yield (R)-2,3-dihydroxy-isovalerate. The chain is Ketol-acid reductoisomerase (NADP(+)) from Rhizobium meliloti (strain 1021) (Ensifer meliloti).